Consider the following 215-residue polypeptide: DNA repair and recombination protein RadB (215 aa).

It belongs to the eukaryotic RecA-like protein family. RadB subfamily.

In terms of biological role, involved in DNA repair and in homologous recombination. May regulate the cleavage reactions of the branch-structured DNA. Has a very weak ATPase activity that is not stimulated by DNA. Binds DNA but does not promote DNA strands exchange. The sequence is that of DNA repair and recombination protein RadB from Methanococcus maripaludis (strain C7 / ATCC BAA-1331).